Here is a 1077-residue protein sequence, read N- to C-terminus: Adenylate cyclase type 4 (1077 aa).

Residues 1 to 28 (MARLFSPRPPPSEDLFYETYYSLSQQYP) lie on the Cytoplasmic side of the membrane. Transmembrane regions (helical) follow at residues 29-50 (LLLL…VAWA), 61-80 (FLTT…GLAS), 94-117 (GLVW…VSAW), 120-138 (VSYF…PLGM), 141-162 (AAVA…YLGP), and 170-190 (LLPQ…AGVY). At 191–585 (HKALMERALR…YRLSAIPAFK (395 aa)) the chain is on the cytoplasmic side. Positions 278, 279, and 322 each coordinate Mg(2+). ATP contacts are provided by residues 278–283 (DIVGFT), 320–322 (LGD), and R366. Phosphoserine is present on S520. T536 carries the phosphothreonine modification. A run of 3 helical transmembrane segments spans residues 586–607 (YYEA…LVTN), 611–633 (ALAI…CFSE), and 664–687 (IALG…FFPT). Over 688-714 (SSDCPFQAPNVSSMISNLSWELPGSLP) the chain is Extracellular. N-linked (GlcNAc...) asparagine glycans are attached at residues N697 and N704. 3 helical membrane passes run 715–736 (LISV…SLFL), 744–764 (LLLL…SHAW), and 791–807 (MGAI…LVLA). Residues 808–1077 (RQNEYYCRLD…RTGPPSATLG (270 aa)) lie on the Cytoplasmic side of the membrane. Residues K925, 1005-1007 (DIW), 1012-1016 (NVASR), and K1052 contribute to the ATP site.

It belongs to the adenylyl cyclase class-4/guanylyl cyclase family. It depends on Mg(2+) as a cofactor. Mn(2+) serves as cofactor. In terms of tissue distribution, detected in the zona glomerulosa and the zona fasciculata in the adrenal gland (at protein level).

The protein resides in the cell membrane. It localises to the cytoplasm. The enzyme catalyses ATP = 3',5'-cyclic AMP + diphosphate. With respect to regulation, activated by forskolin. Insensitive to calcium/calmodulin. Stimulated by GNAS and by the G-protein beta and gamma subunit complex. Its function is as follows. Catalyzes the formation of the signaling molecule cAMP in response to G-protein signaling. The polypeptide is Adenylate cyclase type 4 (ADCY4) (Homo sapiens (Human)).